The sequence spans 242 residues: Protein FsrB (242 aa).

The next 5 membrane-spanning stretches (helical) occupy residues 29–49, 52–72, 78–95, 100–120, and 160–180; these read LTVY…SVLF, LSET…AGGW, WLCR…PFVL, VSLP…LFYW, and KIAS…LPVT.

This sequence belongs to the AgrB family.

The protein resides in the cell membrane. Its function is as follows. May be involved in the proteolytic processing of a quorum sensing system signal molecule precursor required for the regulation of the virulence genes for gelatinase (gelE) and a serine protease (sprE). The polypeptide is Protein FsrB (fsrB) (Enterococcus faecalis (strain ATCC 47077 / OG1RF)).